The following is a 161-amino-acid chain: Cytidylate kinase (161 aa).

7-15 (GLAGTGTTT) provides a ligand contact to ATP.

This sequence belongs to the cytidylate kinase family. Type 2 subfamily.

The protein resides in the cytoplasm. The enzyme catalyses CMP + ATP = CDP + ADP. It catalyses the reaction dCMP + ATP = dCDP + ADP. The chain is Cytidylate kinase (cmk) from Methanothermobacter thermautotrophicus (strain ATCC 29096 / DSM 1053 / JCM 10044 / NBRC 100330 / Delta H) (Methanobacterium thermoautotrophicum).